Reading from the N-terminus, the 200-residue chain is MLLSSLLLLALGYLLGSMPNGYLAGRWLKGIDLRQCGSGSTGATNVLRNVGKGPALVVFLLDVGKGALAVLLAKSFGLNDWVQVLAGLAALAGHIWPVWLGWKGGKAVATGLGMFLGLAWPVGLACLGLFMAVISLSRIVSLSSVVAAIGLPVLMLTSGGSSAYVAVSVVASLMVLWRHRSNIERLLAGTEPRIGEKGKS.

5 helical membrane-spanning segments follow: residues 1-21 (MLLS…MPNG), 53-73 (GPAL…VLLA), 81-101 (WVQV…VWLG), 114-134 (MFLG…MAVI), and 139-159 (IVSL…LTSG).

Belongs to the PlsY family. In terms of assembly, probably interacts with PlsX.

It localises to the cell inner membrane. The enzyme catalyses an acyl phosphate + sn-glycerol 3-phosphate = a 1-acyl-sn-glycero-3-phosphate + phosphate. It participates in lipid metabolism; phospholipid metabolism. Its function is as follows. Catalyzes the transfer of an acyl group from acyl-phosphate (acyl-PO(4)) to glycerol-3-phosphate (G3P) to form lysophosphatidic acid (LPA). This enzyme utilizes acyl-phosphate as fatty acyl donor, but not acyl-CoA or acyl-ACP. This is Glycerol-3-phosphate acyltransferase from Synechococcus sp. (strain CC9902).